Consider the following 417-residue polypeptide: Tryptophan synthase beta chain (417 aa).

Position 99 is an N6-(pyridoxal phosphate)lysine (Lys-99).

The protein belongs to the TrpB family. As to quaternary structure, tetramer of two alpha and two beta chains. Requires pyridoxal 5'-phosphate as cofactor.

The catalysed reaction is (1S,2R)-1-C-(indol-3-yl)glycerol 3-phosphate + L-serine = D-glyceraldehyde 3-phosphate + L-tryptophan + H2O. The protein operates within amino-acid biosynthesis; L-tryptophan biosynthesis; L-tryptophan from chorismate: step 5/5. The beta subunit is responsible for the synthesis of L-tryptophan from indole and L-serine. The protein is Tryptophan synthase beta chain (trpB) of Corynebacterium glutamicum (strain ATCC 13032 / DSM 20300 / JCM 1318 / BCRC 11384 / CCUG 27702 / LMG 3730 / NBRC 12168 / NCIMB 10025 / NRRL B-2784 / 534).